The sequence spans 144 residues: Crossover junction endodeoxyribonuclease Hjc (144 aa).

Position 12 (Glu-12) interacts with Mg(2+). Residue Ser-32 is part of the active site. Positions 42 and 55 each coordinate Mg(2+).

Belongs to the Holliday junction resolvase Hjc family. In terms of assembly, homodimer; forms a 2:1 complex with Hel308 (Hjm). May form a complex with Holliday junction DNA, Hjc and Hjm. The cofactor is Mg(2+).

The catalysed reaction is Endonucleolytic cleavage at a junction such as a reciprocal single-stranded crossover between two homologous DNA duplexes (Holliday junction).. With respect to regulation, cleavage stimulated by PCNA123 and PCNA323 and by RadC2. Functionally, a structure-specific endonuclease that resolves Holliday junction (HJ) intermediates during genetic recombination. Cleaves 4-way DNA junctions introducing paired nicks in opposing strands, leaving a 5'-terminal phosphate and a 3'-terminal hydroxyl group that are subsequently ligated to produce recombinant products. Inhibits the helicase activity of Hel308 (Hjm). The chain is Crossover junction endodeoxyribonuclease Hjc from Sulfurisphaera tokodaii (strain DSM 16993 / JCM 10545 / NBRC 100140 / 7) (Sulfolobus tokodaii).